Here is a 629-residue protein sequence, read N- to C-terminus: 1-deoxy-D-xylulose-5-phosphate synthase (629 aa).

Residues H72 and 113-115 each bind thiamine diphosphate; that span reads GHA. Position 144 (D144) interacts with Mg(2+). Residues 145–146, N174, Y287, and E370 contribute to the thiamine diphosphate site; that span reads GA. N174 contributes to the Mg(2+) binding site.

Belongs to the transketolase family. DXPS subfamily. Homodimer. Mg(2+) serves as cofactor. Thiamine diphosphate is required as a cofactor.

It carries out the reaction D-glyceraldehyde 3-phosphate + pyruvate + H(+) = 1-deoxy-D-xylulose 5-phosphate + CO2. It functions in the pathway metabolic intermediate biosynthesis; 1-deoxy-D-xylulose 5-phosphate biosynthesis; 1-deoxy-D-xylulose 5-phosphate from D-glyceraldehyde 3-phosphate and pyruvate: step 1/1. Functionally, catalyzes the acyloin condensation reaction between C atoms 2 and 3 of pyruvate and glyceraldehyde 3-phosphate to yield 1-deoxy-D-xylulose-5-phosphate (DXP). This Prochlorococcus marinus (strain MIT 9312) protein is 1-deoxy-D-xylulose-5-phosphate synthase.